We begin with the raw amino-acid sequence, 345 residues long: NADH-quinone oxidoreductase subunit H (345 aa).

8 consecutive transmembrane segments (helical) span residues 13–33 (VIILAQTLAVVAFVMISLLFL), 84–104 (FILAPLTSFVLAMIAWAVIPF), 115–135 (VAILYVFAVSSLEVYGVIMGG), 161–181 (IGLIIIGVILSTGSMNFGDIV), 190–210 (LFNWYWLPHFPMVFLFFISCL), 248–268 (YIAIFLMCALTSLLFFGGWLS), 277–297 (PLWMVAKMAFFFFLFAMVKAI), and 309–329 (LGWKVFLPFSLIWVVFVAFAA).

Belongs to the complex I subunit 1 family. NDH-1 is composed of 14 different subunits. Subunits NuoA, H, J, K, L, M, N constitute the membrane sector of the complex.

The protein localises to the cell inner membrane. It catalyses the reaction a quinone + NADH + 5 H(+)(in) = a quinol + NAD(+) + 4 H(+)(out). NDH-1 shuttles electrons from NADH, via FMN and iron-sulfur (Fe-S) centers, to quinones in the respiratory chain. The immediate electron acceptor for the enzyme in this species is believed to be ubiquinone. Couples the redox reaction to proton translocation (for every two electrons transferred, four hydrogen ions are translocated across the cytoplasmic membrane), and thus conserves the redox energy in a proton gradient. This subunit may bind ubiquinone. The polypeptide is NADH-quinone oxidoreductase subunit H (Ruegeria sp. (strain TM1040) (Silicibacter sp.)).